The sequence spans 298 residues: tRNA-cytidine(32) 2-sulfurtransferase (298 aa).

Residues 1 to 26 form a disordered region; the sequence is MTAVISLPDPPQRASRGPRVAGPGQD. The short motif at 57–62 is the PP-loop motif element; that stretch reads SGGKDS. [4Fe-4S] cluster-binding residues include Cys132, Cys135, and Cys223.

It belongs to the TtcA family. In terms of assembly, homodimer. It depends on Mg(2+) as a cofactor. Requires [4Fe-4S] cluster as cofactor.

Its subcellular location is the cytoplasm. The catalysed reaction is cytidine(32) in tRNA + S-sulfanyl-L-cysteinyl-[cysteine desulfurase] + AH2 + ATP = 2-thiocytidine(32) in tRNA + L-cysteinyl-[cysteine desulfurase] + A + AMP + diphosphate + H(+). Its pathway is tRNA modification. Catalyzes the ATP-dependent 2-thiolation of cytidine in position 32 of tRNA, to form 2-thiocytidine (s(2)C32). The sulfur atoms are provided by the cysteine/cysteine desulfurase (IscS) system. The protein is tRNA-cytidine(32) 2-sulfurtransferase of Stenotrophomonas maltophilia (strain R551-3).